A 705-amino-acid chain; its full sequence is Calpain-1 catalytic subunit (705 aa).

Positions 48 to 347 constitute a Calpain catalytic domain; the sequence is LFRDPQFPAG…FSRLEICNLT (300 aa). Residues Cys-108, His-265, and Asn-289 contribute to the active site. Residues 348 to 517 form a domain III region; that stretch reads PDALTKDELS…KQSDTAELDE (170 aa). The interval 518–533 is linker; it reads EISADLADEEEITEDD. Positions 530–565 constitute an EF-hand 1 domain; it reads TEDDIEDGFKNMFQQLAGEDMEISVFELKTILNRVI. The domain IV stretch occupies residues 534 to 704; it reads IEDGFKNMFQ…LAEWLLLTMC (171 aa). Residues Asp-549, Glu-551, Glu-556, Asp-589, Asp-591, Ser-593, Arg-595, Glu-600, Asp-619, Asp-621, Ser-623, Thr-625, and Glu-630 each coordinate Ca(2+). EF-hand domains are found at residues 606 to 641 and 671 to 705; these read NKIR…AGFK and VKLE…TMCG.

Belongs to the peptidase C2 family. In terms of assembly, heterodimer of large (catalytic) and a small (regulatory) subunit. It depends on Ca(2+) as a cofactor. In terms of processing, the N-terminus is blocked. In terms of tissue distribution, ubiquitously expressed.

The protein localises to the cytoplasm. It localises to the cell membrane. The catalysed reaction is Broad endopeptidase specificity.. Its activity is regulated as follows. Activated by micromolar concentrations of calcium and inhibited by calpastatin. Calcium-regulated non-lysosomal thiol-protease which catalyze limited proteolysis of substrates involved in cytoskeletal remodeling and signal transduction. This Gallus gallus (Chicken) protein is Calpain-1 catalytic subunit.